The sequence spans 673 residues: UvrABC system protein B (673 aa).

The Helicase ATP-binding domain occupies 26 to 183 (EGLEDGLAHQ…RRLAELQYTR (158 aa)). Position 39-46 (39-46 (GVTGSGKT)) interacts with ATP. Residues 92–115 (YYDYYQPEAYVPSSDTFIEKDASV) carry the Beta-hairpin motif. Residues 431–597 (QVDDLLSEIR…GLNKKVVDIL (167 aa)) form the Helicase C-terminal domain. A UVR domain is found at 633-668 (QQKIHELEGQMMQHAQNLEFEEAAQIRDQLHQLREL).

Belongs to the UvrB family. In terms of assembly, forms a heterotetramer with UvrA during the search for lesions. Interacts with UvrC in an incision complex.

It localises to the cytoplasm. Functionally, the UvrABC repair system catalyzes the recognition and processing of DNA lesions. A damage recognition complex composed of 2 UvrA and 2 UvrB subunits scans DNA for abnormalities. Upon binding of the UvrA(2)B(2) complex to a putative damaged site, the DNA wraps around one UvrB monomer. DNA wrap is dependent on ATP binding by UvrB and probably causes local melting of the DNA helix, facilitating insertion of UvrB beta-hairpin between the DNA strands. Then UvrB probes one DNA strand for the presence of a lesion. If a lesion is found the UvrA subunits dissociate and the UvrB-DNA preincision complex is formed. This complex is subsequently bound by UvrC and the second UvrB is released. If no lesion is found, the DNA wraps around the other UvrB subunit that will check the other stand for damage. The sequence is that of UvrABC system protein B from Klebsiella pneumoniae subsp. pneumoniae (strain ATCC 700721 / MGH 78578).